We begin with the raw amino-acid sequence, 338 residues long: Ketol-acid reductoisomerase (NADP(+)) (338 aa).

The region spanning 1–181 is the KARI N-terminal Rossmann domain; that stretch reads MNIYYDKDCD…GGGRAGIIET (181 aa). NADP(+)-binding positions include 24–27, Arg-47, Ser-50, Ser-52, and 82–85; these read YGSQ and DEHQ. Residue His-107 is part of the active site. Gly-133 contacts NADP(+). One can recognise a KARI C-terminal knotted domain in the interval 182–327; the sequence is AFREETETDL…ERLRSMMPWI (146 aa). Mg(2+) is bound by residues Asp-190, Glu-194, Glu-226, and Glu-230. A substrate-binding site is contributed by Ser-251.

Belongs to the ketol-acid reductoisomerase family. The cofactor is Mg(2+).

The catalysed reaction is (2R)-2,3-dihydroxy-3-methylbutanoate + NADP(+) = (2S)-2-acetolactate + NADPH + H(+). It carries out the reaction (2R,3R)-2,3-dihydroxy-3-methylpentanoate + NADP(+) = (S)-2-ethyl-2-hydroxy-3-oxobutanoate + NADPH + H(+). The protein operates within amino-acid biosynthesis; L-isoleucine biosynthesis; L-isoleucine from 2-oxobutanoate: step 2/4. Its pathway is amino-acid biosynthesis; L-valine biosynthesis; L-valine from pyruvate: step 2/4. Involved in the biosynthesis of branched-chain amino acids (BCAA). Catalyzes an alkyl-migration followed by a ketol-acid reduction of (S)-2-acetolactate (S2AL) to yield (R)-2,3-dihydroxy-isovalerate. In the isomerase reaction, S2AL is rearranged via a Mg-dependent methyl migration to produce 3-hydroxy-3-methyl-2-ketobutyrate (HMKB). In the reductase reaction, this 2-ketoacid undergoes a metal-dependent reduction by NADPH to yield (R)-2,3-dihydroxy-isovalerate. The protein is Ketol-acid reductoisomerase (NADP(+)) of Nitrosococcus oceani (strain ATCC 19707 / BCRC 17464 / JCM 30415 / NCIMB 11848 / C-107).